A 601-amino-acid polypeptide reads, in one-letter code: Glutathione-regulated potassium-efflux system protein KefB (601 aa).

Helical transmembrane passes span 4–24, 29–49, 55–75, 87–107, 115–135, 152–172, 177–197, 207–227, 230–250, 262–282, 284–304, 324–344, and 356–376; these read SDLL…VPLA, IGAV…GLGF, EILH…GLEL, IFGV…GLLM, AAVI…LQLM, VLLF…LLAG, HFDW…LIGG, FIAD…LVLG, LFMD…GVLL, AIDP…GMSL, LGVL…LVAV, MQFA…FSTA, and SLLL…MKLV. Positions 400–519 constitute an RCK N-terminal domain; it reads KPQVIVVGFG…AGVTQFSRET (120 aa).

It belongs to the monovalent cation:proton antiporter 2 (CPA2) transporter (TC 2.A.37) family. KefB subfamily. Interacts with the regulatory subunit KefG.

It localises to the cell inner membrane. Functionally, pore-forming subunit of a potassium efflux system that confers protection against electrophiles. Catalyzes K(+)/H(+) antiport. This chain is Glutathione-regulated potassium-efflux system protein KefB, found in Citrobacter koseri (strain ATCC BAA-895 / CDC 4225-83 / SGSC4696).